A 651-amino-acid polypeptide reads, in one-letter code: Intraflagellar transport protein 70A (651 aa).

TPR repeat units follow at residues 8 to 41 (DGEY…QYRS), 42 to 75 (RAGL…SPEV), 140 to 173 (PESE…MGYK), 175 to 207 (DLSF…GIRE), 372 to 405 (LTEQ…YDET), 410 to 443 (IPVL…CNEH), and 445 to 478 (IWKL…HYDN). Residues 494 to 521 (YIMTSQNEEAEELMRKIEKEEEQIAYEN) adopt a coiled-coil conformation. A TPR 8 repeat occupies 530 to 563 (CIVNLVIGTLYCAKGNYEFGISRVIKSLEPYNKK).

It belongs to the TTC30/dfy-1/fleer family.

The protein resides in the cell projection. It is found in the cilium. In terms of biological role, required for polyglutamylation of axonemal tubulin. Plays a role in anterograde intraflagellar transport (IFT), the process by which cilia precursors are transported from the base of the cilium to the site of their incorporation at the tip. The sequence is that of Intraflagellar transport protein 70A (ift70a) from Xenopus laevis (African clawed frog).